A 301-amino-acid chain; its full sequence is F1 operon positive regulatory protein (301 aa).

An HTH araC/xylS-type domain is found at N8 to I107. 2 DNA-binding regions (H-T-H motif) span residues D26–V47 and I74–F97.

Its function is as follows. Positive regulator of F1 operon expression. The polypeptide is F1 operon positive regulatory protein (caf1R) (Yersinia pestis).